The primary structure comprises 197 residues: Phospholipid hydroperoxide glutathione peroxidase (197 aa).

The residue at position 40 (serine 40) is a Phosphoserine. Selenocysteine 73 is an active-site residue. A non-standard amino acid (selenocysteine) is located at residue selenocysteine 73.

The protein belongs to the glutathione peroxidase family. Monomer. Has a tendency to form higher mass oligomers. Interacts with FUNDC1; this interaction promotes GPX4 recruitment into mitochondria through TOM/TIM complex where it is degraded by mitophagy.

The protein resides in the mitochondrion. The protein localises to the cytoplasm. The enzyme catalyses a hydroperoxy polyunsaturated fatty acid + 2 glutathione = a hydroxy polyunsaturated fatty acid + glutathione disulfide + H2O. The catalysed reaction is (12S)-hydroperoxy-(5Z,8Z,10E,14Z)-eicosatetraenoate + 2 glutathione = (12S)-hydroxy-(5Z,8Z,10E,14Z)-eicosatetraenoate + glutathione disulfide + H2O. It carries out the reaction (13S)-hydroperoxy-(9Z,11E)-octadecadienoate + 2 glutathione = (13S)-hydroxy-(9Z,11E)-octadecadienoate + glutathione disulfide + H2O. Its function is as follows. Essential antioxidant peroxidase that directly reduces phospholipid hydroperoxide even if they are incorporated in membranes and lipoproteins. Can also reduce fatty acid hydroperoxide, cholesterol hydroperoxide and thymine hydroperoxide. Plays a key role in protecting cells from oxidative damage by preventing membrane lipid peroxidation. Required to prevent cells from ferroptosis, a non-apoptotic cell death resulting from an iron-dependent accumulation of lipid reactive oxygen species. The presence of selenocysteine (Sec) versus Cys at the active site is essential for life: it provides resistance to overoxidation and prevents cells against ferroptosis. The presence of Sec at the active site is also essential for the survival of a specific type of parvalbumin-positive interneurons, thereby preventing against fatal epileptic seizures. May be required to protect cells from the toxicity of ingested lipid hydroperoxides. Required for normal sperm development and male fertility. Essential for maturation and survival of photoreceptor cells. Plays a role in a primary T-cell response to viral and parasitic infection by protecting T-cells from ferroptosis and by supporting T-cell expansion. Plays a role of glutathione peroxidase in platelets in the arachidonic acid metabolism. Reduces hydroperoxy ester lipids formed by a 15-lipoxygenase that may play a role as down-regulator of the cellular 15-lipoxygenase pathway. This chain is Phospholipid hydroperoxide glutathione peroxidase, found in Sapajus apella (Brown-capped capuchin).